The following is a 586-amino-acid chain: Aspartate--tRNA ligase (586 aa).

Residue Glu-171 participates in L-aspartate binding. The aspartate stretch occupies residues 195 to 198 (QLFK). Position 217 (Arg-217) interacts with L-aspartate. Residues 217–219 (RDE) and Gln-226 contribute to the ATP site. His-448 is a binding site for L-aspartate. Glu-482 contacts ATP. Residue Arg-489 participates in L-aspartate binding. 534 to 537 (GLDR) is a binding site for ATP.

It belongs to the class-II aminoacyl-tRNA synthetase family. Type 1 subfamily. In terms of assembly, homodimer.

It localises to the cytoplasm. It carries out the reaction tRNA(Asp) + L-aspartate + ATP = L-aspartyl-tRNA(Asp) + AMP + diphosphate. Catalyzes the attachment of L-aspartate to tRNA(Asp) in a two-step reaction: L-aspartate is first activated by ATP to form Asp-AMP and then transferred to the acceptor end of tRNA(Asp). This Buchnera aphidicola subsp. Acyrthosiphon pisum (strain APS) (Acyrthosiphon pisum symbiotic bacterium) protein is Aspartate--tRNA ligase.